Reading from the N-terminus, the 106-residue chain is UPF0145 protein Athe_0545 (106 aa).

This sequence belongs to the UPF0145 family.

The protein is UPF0145 protein Athe_0545 of Caldicellulosiruptor bescii (strain ATCC BAA-1888 / DSM 6725 / KCTC 15123 / Z-1320) (Anaerocellum thermophilum).